We begin with the raw amino-acid sequence, 249 residues long: MANDLLDNKGRGEAGWSWPAIHPEGRKYGLVVAAASLVTAFLAWETIAWPLAFLALGVLAFFRDPERIVPHDEKAIVSPADGMVSLISEVEPPPELAMADAAGNPGLGDAPLTRISIFMSVFDVHINRTPIAGQVSRLIYVPGKFLNADLDKASEENERQHLLVSRPDGLQIGFTQIAGLVARRIVPFVKQGDIVAVGQRIGLIRFGSRVDVYLPAGTAPAVIKGQKVVAGETVLARVGENRLLEGSAQ.

Catalysis depends on Ser208, which acts as the Schiff-base intermediate with substrate; via pyruvic acid. A Pyruvic acid (Ser); by autocatalysis modification is found at Ser208.

The protein belongs to the phosphatidylserine decarboxylase family. PSD-A subfamily. In terms of assembly, heterodimer of a large membrane-associated beta subunit and a small pyruvoyl-containing alpha subunit. Requires pyruvate as cofactor. Is synthesized initially as an inactive proenzyme. Formation of the active enzyme involves a self-maturation process in which the active site pyruvoyl group is generated from an internal serine residue via an autocatalytic post-translational modification. Two non-identical subunits are generated from the proenzyme in this reaction, and the pyruvate is formed at the N-terminus of the alpha chain, which is derived from the carboxyl end of the proenzyme. The post-translation cleavage follows an unusual pathway, termed non-hydrolytic serinolysis, in which the side chain hydroxyl group of the serine supplies its oxygen atom to form the C-terminus of the beta chain, while the remainder of the serine residue undergoes an oxidative deamination to produce ammonia and the pyruvoyl prosthetic group on the alpha chain.

It is found in the cell membrane. The enzyme catalyses a 1,2-diacyl-sn-glycero-3-phospho-L-serine + H(+) = a 1,2-diacyl-sn-glycero-3-phosphoethanolamine + CO2. It functions in the pathway phospholipid metabolism; phosphatidylethanolamine biosynthesis; phosphatidylethanolamine from CDP-diacylglycerol: step 2/2. Functionally, catalyzes the formation of phosphatidylethanolamine (PtdEtn) from phosphatidylserine (PtdSer). The polypeptide is Phosphatidylserine decarboxylase proenzyme (Erythrobacter litoralis (strain HTCC2594)).